The primary structure comprises 280 residues: MDIKINGITVGNDAPFVLFGGINVLEDLDSTLQTCAHYVEVTRKLGIPYIFKASFDKANRSSIHSYRGVGLEEGLKIFEKVKAEFGIPVITDVHEPHQCQPVAEVCDVIQLPAFLARQTDLVAAMAETGNVINIKKPQFLSPSQMKNIVEKFREAGNGKLILCERGSSFGYDNLVVDMLGFGVMKQTCGNLPVIFDVTHSLQTRDAGSAASGGRRAQALDLALAGMATRLAGLFLESHPDPKLAKCDGPSALPLHLLEDFLIRIKALDDLIKSQPILTIE.

It belongs to the KdsA family.

The protein resides in the cytoplasm. The enzyme catalyses D-arabinose 5-phosphate + phosphoenolpyruvate + H2O = 3-deoxy-alpha-D-manno-2-octulosonate-8-phosphate + phosphate. The protein operates within carbohydrate biosynthesis; 3-deoxy-D-manno-octulosonate biosynthesis; 3-deoxy-D-manno-octulosonate from D-ribulose 5-phosphate: step 2/3. Its pathway is bacterial outer membrane biogenesis; lipopolysaccharide biosynthesis. The chain is 2-dehydro-3-deoxyphosphooctonate aldolase from Neisseria meningitidis serogroup C / serotype 2a (strain ATCC 700532 / DSM 15464 / FAM18).